Here is a 500-residue protein sequence, read N- to C-terminus: Prostacyclin synthase (500 aa).

The chain crosses the membrane as a helical span at residues 1-20 (MAWAALLGLLAALLLLLLLS). Substrate contacts are provided by residues Arg106, Leu112, Asn287, 358-359 (TR), and Arg382. Cys441 lines the heme pocket.

The protein belongs to the cytochrome P450 family. Requires heme as cofactor. Widely expressed; particularly abundant in ovary, heart, skeletal muscle, lung and prostate.

The protein localises to the endoplasmic reticulum membrane. The catalysed reaction is prostaglandin H2 = prostaglandin I2. It carries out the reaction a hydroperoxyeicosatetraenoate = an oxoeicosatetraenoate + H2O. The enzyme catalyses (15S)-hydroperoxy-(5Z,8Z,11Z,13E)-eicosatetraenoate = 15-oxo-(5Z,8Z,11Z,13E)-eicosatetraenoate + H2O. It catalyses the reaction (15S)-hydroperoxy-(5Z,8Z,11Z,13E)-eicosatetraenoate + AH2 = (15S)-hydroxy-(5Z,8Z,11Z,13E)-eicosatetraenoate + A + H2O. Catalyzes the biosynthesis and metabolism of eicosanoids. Catalyzes the isomerization of prostaglandin H2 to prostacyclin (= prostaglandin I2), a potent mediator of vasodilation and inhibitor of platelet aggregation. Additionally, displays dehydratase activity, toward hydroperoxyeicosatetraenoates (HPETEs), especially toward (15S)-hydroperoxy-(5Z,8Z,11Z,13E)-eicosatetraenoate (15(S)-HPETE). This chain is Prostacyclin synthase (PTGIS), found in Homo sapiens (Human).